The primary structure comprises 121 residues: Protein PilH (121 aa).

Residues 3 to 119 form the Response regulatory domain; that stretch reads RILIVDDSPT…TLLKTINAVL (117 aa). Asp-52 carries the 4-aspartylphosphate modification.

In terms of biological role, may be a part of a signal-transduction system that regulates twitching motility by controlling pilus function (extension and retraction). This is Protein PilH (pilH) from Pseudomonas aeruginosa (strain ATCC 15692 / DSM 22644 / CIP 104116 / JCM 14847 / LMG 12228 / 1C / PRS 101 / PAO1).